The chain runs to 502 residues: MTEKKYIVALDQGTTSSRAVVMDHDANIVSVSQREFEQIYPKPGWVEHDPMEIWASQSSTLVEVLAKADISSDQIAAIGITNQRETAIVWERETGKPIYNAIVWQCRRTADICEQLKRDGLEDYIRDNTGLVVDPYFSGTKVKWILDHVEGSRERAKRGELLFGTVDTWLIWKMTQGRVHVTDYTNASRTMLFNIHDLDWDDKMLDVLDIPRAMLPQVRKSSEVYGQTNIGGKGGTRIPIAGIAGDQQAALFGQLCVKEGMAKNTYGTGCFMLMNTGEKAVKSENGLLTTIACGPSGEVNYALEGAVFMAGASIQWLRDEMKLISDAFDSEYFATKVKDTNGVYVVPAFTGLGAPYWDPYARGAIFGLTRGVNSNHIIRATLESIAYQTRDVLEAMQADSGIRLHALRVDGGAVANNFLMQFQSDILGTRVERPEVREVTALGAAYLAGLAVGYWQNLDELQEKAVIEREFRPGIETTERNYRYSGWKKAVKRAMAWEEHDK.

Thr-14 provides a ligand contact to ADP. Residues Thr-14, Thr-15, and Ser-16 each coordinate ATP. Residue Thr-14 participates in sn-glycerol 3-phosphate binding. Position 18 (Arg-18) interacts with ADP. Sn-glycerol 3-phosphate-binding residues include Arg-84, Glu-85, Tyr-136, and Asp-246. Positions 84, 85, 136, 246, and 247 each coordinate glycerol. Residues Thr-268 and Gly-311 each contribute to the ADP site. 4 residues coordinate ATP: Thr-268, Gly-311, Gln-315, and Gly-412. Positions 412 and 416 each coordinate ADP.

The protein belongs to the FGGY kinase family. As to quaternary structure, homotetramer and homodimer (in equilibrium). Heterodimer with EIIA-Glc. Binds 1 zinc ion per glycerol kinase EIIA-Glc dimer. The zinc ion is important for dimerization.

The enzyme catalyses glycerol + ATP = sn-glycerol 3-phosphate + ADP + H(+). It functions in the pathway polyol metabolism; glycerol degradation via glycerol kinase pathway; sn-glycerol 3-phosphate from glycerol: step 1/1. Its activity is regulated as follows. Activity of this regulatory enzyme is affected by several metabolites. Allosterically and non-competitively inhibited by fructose 1,6-bisphosphate (FBP) and unphosphorylated phosphocarrier protein EIIA-Glc (III-Glc), an integral component of the bacterial phosphotransferase (PTS) system. In terms of biological role, key enzyme in the regulation of glycerol uptake and metabolism. Catalyzes the phosphorylation of glycerol to yield sn-glycerol 3-phosphate. This chain is Glycerol kinase, found in Salmonella heidelberg (strain SL476).